Consider the following 163-residue polypeptide: Phosphopantetheine adenylyltransferase (163 aa).

Position 9 (Thr9) interacts with substrate. ATP contacts are provided by residues 9–10 (TF) and His17. Lys41, Thr73, and Arg87 together coordinate substrate. ATP contacts are provided by residues 88–90 (GLR), Glu98, and 123–129 (FSFISSS).

The protein belongs to the bacterial CoaD family. Homohexamer. The cofactor is Mg(2+).

The protein localises to the cytoplasm. It carries out the reaction (R)-4'-phosphopantetheine + ATP + H(+) = 3'-dephospho-CoA + diphosphate. Its pathway is cofactor biosynthesis; coenzyme A biosynthesis; CoA from (R)-pantothenate: step 4/5. Functionally, reversibly transfers an adenylyl group from ATP to 4'-phosphopantetheine, yielding dephospho-CoA (dPCoA) and pyrophosphate. This chain is Phosphopantetheine adenylyltransferase, found in Desulfitobacterium hafniense (strain DSM 10664 / DCB-2).